Here is a 76-residue protein sequence, read N- to C-terminus: Vasotab-TY1 (76 aa).

The first 21 residues, Met-1–Asp-21, serve as a signal peptide directing secretion. Positions Asp-22–Lys-76 constitute a Kazal-like domain. 3 cysteine pairs are disulfide-bonded: Cys-23–Cys-60, Cys-27–Cys-53, and Cys-35–Cys-75.

As to expression, expressed by the salivary gland.

The protein resides in the secreted. Vasodilator protein that inhibits vasoconstriction of isolated rat femoral artery induced by phenylephrine. Since platelet aggregation and vasoconstriction are key hemostatic responses, particularly in small wounds, this protein likely participates in the antihemostatic responses during blood feeding. Blocks L-type calcium channels (Cav1/CACNA1) in left ventricular myocytes isolated from rat hearts. In Tabanus yao (Horsefly), this protein is Vasotab-TY1.